The primary structure comprises 141 residues: Hemoglobin subunit alpha (141 aa).

The Globin domain occupies 1 to 141 (VLSPADKSNV…VSTVLTSKYR (141 aa)). At serine 3 the chain carries Phosphoserine. Lysine 7 and lysine 11 each carry N6-succinyllysine. An N6-acetyllysine; alternate modification is found at lysine 16. Lysine 16 carries the N6-succinyllysine; alternate modification. Tyrosine 24 is modified (phosphotyrosine). Serine 35 is subject to Phosphoserine. Position 40 is an N6-succinyllysine (lysine 40). Serine 49 is subject to Phosphoserine. Residue histidine 58 participates in O2 binding. A heme b-binding site is contributed by histidine 87. Serine 102 carries the post-translational modification Phosphoserine. A Phosphothreonine modification is found at threonine 108. Phosphoserine is present on residues serine 124 and serine 131. Threonine 134 and threonine 137 each carry phosphothreonine. At serine 138 the chain carries Phosphoserine.

This sequence belongs to the globin family. In terms of assembly, heterotetramer of two alpha chains and two beta chains. Red blood cells.

Functionally, involved in oxygen transport from the lung to the various peripheral tissues. Its function is as follows. Hemopressin acts as an antagonist peptide of the cannabinoid receptor CNR1. Hemopressin-binding efficiently blocks cannabinoid receptor CNR1 and subsequent signaling. This Mico argentatus (Silvery marmoset) protein is Hemoglobin subunit alpha (HBA).